A 252-amino-acid chain; its full sequence is 2-succinyl-6-hydroxy-2,4-cyclohexadiene-1-carboxylate synthase (252 aa).

It belongs to the AB hydrolase superfamily. MenH family. Monomer.

The catalysed reaction is 5-enolpyruvoyl-6-hydroxy-2-succinyl-cyclohex-3-ene-1-carboxylate = (1R,6R)-6-hydroxy-2-succinyl-cyclohexa-2,4-diene-1-carboxylate + pyruvate. Its pathway is quinol/quinone metabolism; 1,4-dihydroxy-2-naphthoate biosynthesis; 1,4-dihydroxy-2-naphthoate from chorismate: step 3/7. It participates in quinol/quinone metabolism; menaquinone biosynthesis. Catalyzes a proton abstraction reaction that results in 2,5-elimination of pyruvate from 2-succinyl-5-enolpyruvyl-6-hydroxy-3-cyclohexene-1-carboxylate (SEPHCHC) and the formation of 2-succinyl-6-hydroxy-2,4-cyclohexadiene-1-carboxylate (SHCHC). The polypeptide is 2-succinyl-6-hydroxy-2,4-cyclohexadiene-1-carboxylate synthase (Salmonella choleraesuis (strain SC-B67)).